A 510-amino-acid polypeptide reads, in one-letter code: NAD(P) transhydrogenase subunit alpha (510 aa).

At 1–401 (MRIGIPRERL…EEKCTCSPWR (401 aa)) the chain is on the cytoplasmic side. NAD(+) contacts are provided by residues 120–122 (RIS), Val175, 195–197 (DTR), Glu238, and Leu257. Helical transmembrane passes span 402-422 (KYAL…VAPK) and 423-443 (EFLG…YVVW). Over 444-452 (NVSHALHTP) the chain is Cytoplasmic. The helical transmembrane segment at 453-473 (LMSVTNAISGIIVVGALLQIG) threads the bilayer. Residues 474–476 (QGG) lie on the Periplasmic side of the membrane. A helical transmembrane segment spans residues 477-497 (WVSFLSFIAVLIASINIFGGF). Residues 498–510 (TVTQRMLKMFRKN) are Cytoplasmic-facing.

The protein belongs to the AlaDH/PNT family. Heterodimer of an alpha (PntA) and a beta (PntB) chain. Alpha subunit serves as the dimerization unit.

It localises to the cell inner membrane. The enzyme catalyses NAD(+) + NADPH + H(+)(in) = NADH + NADP(+) + H(+)(out). The transhydrogenation between NADH and NADP is coupled to respiration and ATP hydrolysis and functions as a proton pump across the membrane. The protein is NAD(P) transhydrogenase subunit alpha (pntA) of Escherichia coli (strain K12).